Reading from the N-terminus, the 273-residue chain is Manganese catalase (273 aa).

Position 35 (Glu35) interacts with Mn(2+). The Ca(2+) site is built by Asp57 and Asp61. Residues Glu66, His69, Glu149, and His182 each coordinate Mn(2+). Ca(2+)-binding residues include Asn220, Ser222, and Gly224. Positions 254–273 are disordered; it reads EKPELKPAPPFVHNTLPGRE.

It belongs to the manganese catalase family. Ca(2+) serves as cofactor. The cofactor is Mn(2+).

The catalysed reaction is 2 H2O2 = O2 + 2 H2O. Catalyzes the decomposition of hydrogen peroxide into water and oxygen. This Bacillus subtilis (strain 168) protein is Manganese catalase (ydbD).